The primary structure comprises 239 residues: 4-hydroxy-tetrahydrodipicolinate reductase (239 aa).

Residues aspartate 32, 73–75, and 98–101 each bind NAD(+); these read GTT and ASNF. The active-site Proton donor/acceptor is the histidine 133. Residue histidine 134 coordinates (S)-2,3,4,5-tetrahydrodipicolinate. Lysine 137 functions as the Proton donor in the catalytic mechanism. 143-144 is a binding site for (S)-2,3,4,5-tetrahydrodipicolinate; it reads GT.

It belongs to the DapB family.

The protein localises to the cytoplasm. The catalysed reaction is (S)-2,3,4,5-tetrahydrodipicolinate + NAD(+) + H2O = (2S,4S)-4-hydroxy-2,3,4,5-tetrahydrodipicolinate + NADH + H(+). It carries out the reaction (S)-2,3,4,5-tetrahydrodipicolinate + NADP(+) + H2O = (2S,4S)-4-hydroxy-2,3,4,5-tetrahydrodipicolinate + NADPH + H(+). The protein operates within amino-acid biosynthesis; L-lysine biosynthesis via DAP pathway; (S)-tetrahydrodipicolinate from L-aspartate: step 4/4. Functionally, catalyzes the conversion of 4-hydroxy-tetrahydrodipicolinate (HTPA) to tetrahydrodipicolinate. This Christiangramia forsetii (strain DSM 17595 / CGMCC 1.15422 / KT0803) (Gramella forsetii) protein is 4-hydroxy-tetrahydrodipicolinate reductase.